The sequence spans 2269 residues: Neuron navigator 3 (2269 aa).

In terms of domain architecture, Calponin-homology (CH) spans 55–162; the sequence is SKICKIYTDW…LFFILSRYKQ (108 aa). A compositionally biased stretch (polar residues) spans 186-207; the sequence is TGAAQLSQHKTQDMQSSLTARY. 2 disordered regions span residues 186–358 and 388–532; these read TGAA…RSML and SEFG…NKGS. Low complexity predominate over residues 236–252; the sequence is GSGSNSSKGSSNLNRRS. Polar residues-rich tracts occupy residues 267-291 and 305-319; these read ASGN…QQLA and SKSM…SSML. The span at 323-333 shows a compositional bias: pro residues; sequence PPSPTSSPTPP. Positions 346-356 are enriched in polar residues; it reads ASKSAPGNQRS. Residues 411-432 are compositionally biased toward low complexity; that stretch reads PSASAFAPPSKSNNCKNHNNKS. Residues 505–518 show a composition bias toward polar residues; it reads TATSKPAGTQSCVP. Positions 644–672 form a coiled coil; that stretch reads ETRRMRTVKNIADLRQNLEETMSSLRGTQ. Disordered regions lie at residues 692–737, 756–776, 836–1036, 1050–1079, 1097–1412, and 1461–1487; these read GRGL…STTV, ASGA…VGPE, VKEM…IPGP, SGSA…TSLD, VPLQ…GTTC, and GGSA…TDEV. Composition is skewed to polar residues over residues 699-716 and 727-737; these read SSRS…SSPR and PPRSSAGSTTV. The segment covering 847–860 has biased composition (low complexity); it reads DSSSVSSGLSDTLD. A compositionally biased stretch (polar residues) spans 874 to 886; the sequence is GISSRKSKAAQSN. Low complexity predominate over residues 919-932; it reads PSCKWKTSSPSSSC. The span at 939–950 shows a compositional bias: polar residues; that stretch reads QKTGLPMSQTGS. Positions 977 to 989 are enriched in basic and acidic residues; the sequence is GKTDDAKASEKGK. Low complexity predominate over residues 1110-1137; that stretch reads SSSGGSSVVSRSGHRSSSSSIDSNVSGK. The span at 1163–1172 shows a compositional bias: polar residues; sequence GRSSPVTINQ. Composition is skewed to low complexity over residues 1185–1202 and 1223–1234; these read GTGL…TQSG and GSKASSKPSSPG. Gly residues predominate over residues 1266 to 1276; it reads GSLGSMGGQSG. Positions 1292–1305 are enriched in low complexity; the sequence is SPASSPASGLSLPS. Polar residues-rich tracts occupy residues 1313-1339 and 1354-1363; these read NLSS…SSES and RTGSVKSTLS. Over residues 1381–1391 the composition is skewed to basic and acidic residues; the sequence is TSHEEGKEWLR. Residues 1392-1412 are compositionally biased toward polar residues; sequence SHSTGGLQDTGSPLSPPGTTC. A coiled-coil region spans residues 1499 to 1586; that stretch reads SSLYSAQIRK…TDAQTAIQVA (88 aa). Disordered regions lie at residues 1602–1672, 1756–1792, and 2207–2269; these read QHSS…PSSP, NDRL…SRQS, and GYSS…ESAL. 2 stretches are compositionally biased toward low complexity: residues 1605 to 1623 and 1765 to 1792; these read SESM…LGSA and TTPA…SRQS. Residues 1697–1765 adopt a coiled-coil conformation; the sequence is CECTEAEAEI…NDRLKSSGNT (69 aa). The span at 2208–2224 shows a compositional bias: polar residues; the sequence is YSSSKDGAASKQVSQSD.

It belongs to the Nav/unc-53 family. As to quaternary structure, interacts with F-actin.

The protein resides in the nucleus outer membrane. The protein localises to the golgi apparatus. Its subcellular location is the cell projection. It is found in the lamellipodium. It localises to the filopodium. In terms of biological role, involved in liver and heart organogenesis during embryo development. Plays a role in the migration of hepatoblasts from the intestinal endoderm during liver organogenesis; possibly by modulating actin polymerization during hepatoblast outgrowth. May be involved in neuron regeneration. This chain is Neuron navigator 3 (nav3), found in Danio rerio (Zebrafish).